The following is a 292-amino-acid chain: ATP synthase gamma chain (292 aa).

Belongs to the ATPase gamma chain family. As to quaternary structure, F-type ATPases have 2 components, CF(1) - the catalytic core - and CF(0) - the membrane proton channel. CF(1) has five subunits: alpha(3), beta(3), gamma(1), delta(1), epsilon(1). CF(0) has three main subunits: a, b and c.

It localises to the cell inner membrane. Its function is as follows. Produces ATP from ADP in the presence of a proton gradient across the membrane. The gamma chain is believed to be important in regulating ATPase activity and the flow of protons through the CF(0) complex. In Syntrophobacter fumaroxidans (strain DSM 10017 / MPOB), this protein is ATP synthase gamma chain.